The primary structure comprises 95 residues: Small ribosomal subunit protein bS18 (95 aa).

This sequence belongs to the bacterial ribosomal protein bS18 family. In terms of assembly, part of the 30S ribosomal subunit. Forms a tight heterodimer with protein bS6.

Binds as a heterodimer with protein bS6 to the central domain of the 16S rRNA, where it helps stabilize the platform of the 30S subunit. This is Small ribosomal subunit protein bS18 from Rickettsia massiliae (strain Mtu5).